A 353-amino-acid polypeptide reads, in one-letter code: Guanine nucleotide-binding protein subunit alpha (353 aa).

A disordered region spans residues 1 to 25; it reads MGCGMSTEDKEGKARNEEIENQLKR. G2 carries N-myristoyl glycine lipidation. Residue C3 is the site of S-palmitoyl cysteine attachment. The segment covering 7–25 has biased composition (basic and acidic residues); the sequence is TEDKEGKARNEEIENQLKR. The 322-residue stretch at 32–353 folds into the G-alpha domain; it reads NEIKMLLLGA…QENLRLCGLI (322 aa). The G1 motif stretch occupies residues 35–48; sequence KMLLLGAGESGKST. Positions 43, 44, 45, 46, 47, 48, 150, 175, 181, 203, 269, 270, 272, and 325 each coordinate GTP. S47 lines the Mg(2+) pocket. A G2 motif region spans residues 173–181; it reads DVLRSRVKT. Mg(2+) is bound at residue T181. Residues 196 to 205 form a G3 motif region; it reads YRMFDVGGQR. The segment at 265–272 is G4 motif; the sequence is ILFLNKID. Residues 323–328 are G5 motif; sequence TCATDT.

The protein belongs to the G-alpha family. G(q) subfamily. In terms of assembly, g proteins are composed of 3 units; alpha, beta and gamma. The alpha chain contains the guanine nucleotide binding site. Mg(2+) is required as a cofactor.

Its function is as follows. Guanine nucleotide-binding proteins (G proteins) are involved as modulators or transducers in various transmembrane signaling systems. In Emericella nidulans (strain FGSC A4 / ATCC 38163 / CBS 112.46 / NRRL 194 / M139) (Aspergillus nidulans), this protein is Guanine nucleotide-binding protein subunit alpha (fadA).